A 266-amino-acid polypeptide reads, in one-letter code: 4-hydroxy-tetrahydrodipicolinate reductase (266 aa).

10-15 (GPRGRM) provides a ligand contact to NAD(+). Lys-38 provides a ligand contact to NADP(+). NAD(+) is bound by residues 99–101 (GTT) and 125–128 (APNF). His-155 functions as the Proton donor/acceptor in the catalytic mechanism. Residue His-156 participates in (S)-2,3,4,5-tetrahydrodipicolinate binding. Lys-159 serves as the catalytic Proton donor. (S)-2,3,4,5-tetrahydrodipicolinate is bound at residue 165-166 (GT).

It belongs to the DapB family.

It is found in the cytoplasm. The enzyme catalyses (S)-2,3,4,5-tetrahydrodipicolinate + NAD(+) + H2O = (2S,4S)-4-hydroxy-2,3,4,5-tetrahydrodipicolinate + NADH + H(+). It catalyses the reaction (S)-2,3,4,5-tetrahydrodipicolinate + NADP(+) + H2O = (2S,4S)-4-hydroxy-2,3,4,5-tetrahydrodipicolinate + NADPH + H(+). The protein operates within amino-acid biosynthesis; L-lysine biosynthesis via DAP pathway; (S)-tetrahydrodipicolinate from L-aspartate: step 4/4. Functionally, catalyzes the conversion of 4-hydroxy-tetrahydrodipicolinate (HTPA) to tetrahydrodipicolinate. This chain is 4-hydroxy-tetrahydrodipicolinate reductase, found in Bacillus cereus (strain Q1).